The following is a 900-amino-acid chain: Bifunctional uridylyltransferase/uridylyl-removing enzyme (900 aa).

Residues 1–342 (MPQVDPELFD…PCEQPVQIQP (342 aa)) are uridylyltransferase. The interval 343 to 705 (LNSRFQLRDG…TTQREFESGS (363 aa)) is uridylyl-removing. One can recognise an HD domain in the interval 461-583 (VDAHTLNLIK…VGDQTHLDYL (123 aa)). ACT domains follow at residues 706–789 (QIFI…IIQR) and 816–891 (VLEV…DNGR).

This sequence belongs to the GlnD family. It depends on Mg(2+) as a cofactor.

The enzyme catalyses [protein-PII]-L-tyrosine + UTP = [protein-PII]-uridylyl-L-tyrosine + diphosphate. It carries out the reaction [protein-PII]-uridylyl-L-tyrosine + H2O = [protein-PII]-L-tyrosine + UMP + H(+). With respect to regulation, uridylyltransferase (UTase) activity is inhibited by glutamine, while glutamine activates uridylyl-removing (UR) activity. In terms of biological role, modifies, by uridylylation and deuridylylation, the PII regulatory proteins (GlnB and homologs), in response to the nitrogen status of the cell that GlnD senses through the glutamine level. Under low glutamine levels, catalyzes the conversion of the PII proteins and UTP to PII-UMP and PPi, while under higher glutamine levels, GlnD hydrolyzes PII-UMP to PII and UMP (deuridylylation). Thus, controls uridylylation state and activity of the PII proteins, and plays an important role in the regulation of nitrogen assimilation and metabolism. This chain is Bifunctional uridylyltransferase/uridylyl-removing enzyme, found in Pseudomonas aeruginosa (strain ATCC 15692 / DSM 22644 / CIP 104116 / JCM 14847 / LMG 12228 / 1C / PRS 101 / PAO1).